Consider the following 314-residue polypeptide: Acetaldehyde dehydrogenase 1 (314 aa).

16-19 lines the NAD(+) pocket; the sequence is SGNI. The active-site Acyl-thioester intermediate is Cys-134. Residues 165–173 and Asn-292 contribute to the NAD(+) site; that span reads SAGPGTRAN.

The protein belongs to the acetaldehyde dehydrogenase family.

The catalysed reaction is acetaldehyde + NAD(+) + CoA = acetyl-CoA + NADH + H(+). This is Acetaldehyde dehydrogenase 1 (mhpF) from Cupriavidus necator (strain ATCC 17699 / DSM 428 / KCTC 22496 / NCIMB 10442 / H16 / Stanier 337) (Ralstonia eutropha).